The following is a 362-amino-acid chain: Probable dual-specificity RNA methyltransferase RlmN (362 aa).

Glu105 serves as the catalytic Proton acceptor. Positions 111 to 344 (HEYGNSICVT…VTIRREQGHD (234 aa)) constitute a Radical SAM core domain. The cysteines at positions 118 and 349 are disulfide-linked. 3 residues coordinate [4Fe-4S] cluster: Cys125, Cys129, and Cys132. S-adenosyl-L-methionine is bound by residues 175-176 (GE), Ser207, 230-232 (SLH), and Asn306. Cys349 (S-methylcysteine intermediate) is an active-site residue.

This sequence belongs to the radical SAM superfamily. RlmN family. It depends on [4Fe-4S] cluster as a cofactor.

The protein resides in the cytoplasm. The catalysed reaction is adenosine(2503) in 23S rRNA + 2 reduced [2Fe-2S]-[ferredoxin] + 2 S-adenosyl-L-methionine = 2-methyladenosine(2503) in 23S rRNA + 5'-deoxyadenosine + L-methionine + 2 oxidized [2Fe-2S]-[ferredoxin] + S-adenosyl-L-homocysteine. It catalyses the reaction adenosine(37) in tRNA + 2 reduced [2Fe-2S]-[ferredoxin] + 2 S-adenosyl-L-methionine = 2-methyladenosine(37) in tRNA + 5'-deoxyadenosine + L-methionine + 2 oxidized [2Fe-2S]-[ferredoxin] + S-adenosyl-L-homocysteine. Its function is as follows. Specifically methylates position 2 of adenine 2503 in 23S rRNA and position 2 of adenine 37 in tRNAs. In Bacillus cereus (strain G9842), this protein is Probable dual-specificity RNA methyltransferase RlmN.